A 60-amino-acid polypeptide reads, in one-letter code: Large ribosomal subunit protein bL32 (60 aa).

Basic residues predominate over residues 1-16; the sequence is MAVPRRKTSPSRRGMR. Positions 1-60 are disordered; sequence MAVPRRKTSPSRRGMRRSADAIKKPTYVEDKDSGELRRPHHLDLKTGMYKGRQVLKKKDA. Positions 17–44 are enriched in basic and acidic residues; sequence RSADAIKKPTYVEDKDSGELRRPHHLDL.

The protein belongs to the bacterial ribosomal protein bL32 family.

The chain is Large ribosomal subunit protein bL32 from Bradyrhizobium sp. (strain BTAi1 / ATCC BAA-1182).